A 720-amino-acid polypeptide reads, in one-letter code: Viral guanylyltransferase VP3 (720 aa).

It is found in the virion. The enzyme catalyses a 5'-end diphospho-ribonucleoside in mRNA + GTP + H(+) = a 5'-end (5'-triphosphoguanosine)-ribonucleoside in mRNA + diphosphate. The catalysed reaction is a 5'-end (5'-triphosphoguanosine)-ribonucleoside in mRNA + S-adenosyl-L-methionine = a 5'-end (N(7)-methyl 5'-triphosphoguanosine)-ribonucleoside in mRNA + S-adenosyl-L-homocysteine. Its function is as follows. Outer capsid protein involved in mRNA capping. Catalyzes the last 3 enzymatic activities for formation of the 5' cap structure on the viral plus-strand transcripts, namely the RNA guanylyltransferase, RNA-7N- and RNA-2'O-methyltransferase activities. The sequence is that of Viral guanylyltransferase VP3 (Segment-3) from Banna virus (BAV).